We begin with the raw amino-acid sequence, 482 residues long: Adenylosuccinate lyase (482 aa).

Residues 14–15, 82–84, and 108–109 contribute to the substrate site; these read RY, RHD, and TS. The active-site Proton donor/acceptor is the His156. Residue Gln238 participates in substrate binding. Ser286 serves as the catalytic Proton donor/acceptor. Residues Arg300, Arg326, Ser331, and Arg335 each contribute to the substrate site.

Belongs to the lyase 1 family. Adenylosuccinate lyase subfamily. As to quaternary structure, homotetramer. Residues from neighboring subunits contribute catalytic and substrate-binding residues to each active site.

It carries out the reaction N(6)-(1,2-dicarboxyethyl)-AMP = fumarate + AMP. The catalysed reaction is (2S)-2-[5-amino-1-(5-phospho-beta-D-ribosyl)imidazole-4-carboxamido]succinate = 5-amino-1-(5-phospho-beta-D-ribosyl)imidazole-4-carboxamide + fumarate. The protein operates within purine metabolism; AMP biosynthesis via de novo pathway; AMP from IMP: step 2/2. It functions in the pathway purine metabolism; IMP biosynthesis via de novo pathway; 5-amino-1-(5-phospho-D-ribosyl)imidazole-4-carboxamide from 5-amino-1-(5-phospho-D-ribosyl)imidazole-4-carboxylate: step 2/2. This is Adenylosuccinate lyase (ade8) from Schizosaccharomyces pombe (strain 972 / ATCC 24843) (Fission yeast).